Reading from the N-terminus, the 243-residue chain is Ornithine decarboxylase antizyme 3 (243 aa).

Residues Ser6, Ser9, and Ser12 each carry the phosphoserine modification.

Belongs to the ODC antizyme family. As to quaternary structure, interacts with ODC1 and thereby sterically blocks ODC homodimerization. Interacts with AZIN2; this interaction disrupts the interaction between the antizyme and ODC1. Interacts with GGN. Isoform 2 interacts with PPP1R16A; Modulates PPP1CB activity. Testis-specific. Isoform 2 is expressed in outer dense fibers, fibrous sheath and the connecting piece of sperm.

It localises to the nucleus. The protein resides in the cytoplasm. It is found in the cell projection. Its subcellular location is the cilium. The protein localises to the flagellum. In terms of biological role, ornithine decarboxylase (ODC) antizyme protein that negatively regulates ODC activity and intracellular polyamine biosynthesis and uptake in response to increased intracellular polyamine levels. Binds to ODC monomers, inhibiting the assembly of the functional ODC homodimers. Does not target the ODC monomers for degradation, which allows a protein synthesis-independent restoration of ODC activity. Stabilizes AZIN2 by interfering with its ubiquitination. Involved in the translocation of AZNI2 from ER-Golgi intermediate compartment (ERGIC) to the cytosol. Probably plays a key role in spermatogenesis by regulating the intracellular concentration of polyamines in haploid germ cells. Does not possess antizyme activity. Modulates PPP1CB activity through its interaction with PPP1R16A. The sequence is that of Ornithine decarboxylase antizyme 3 from Rattus norvegicus (Rat).